The chain runs to 554 residues: Acetyl-S-ACP:malonate ACP transferase (554 aa).

It localises to the cytoplasm. The catalysed reaction is acetyl-[ACP] + malonate = malonyl-[ACP] + acetate. Functionally, alpha subunit of the biotin-independent and biotin-dependent malonate decarboxylase multienzyme complex (EC 4.1.1.88 and EC 7.2.4.4, respectively). Acts as an acyl-carrier protein (ACP) transferase component. This first step in malonate decarboxylation involves the exchange of an acetyl thioester residue bound to the activated ACP subunit for a malonyl thioester residue. Has a weak activity with acetyl-CoA as substrate. This chain is Acetyl-S-ACP:malonate ACP transferase (madA), found in Malonomonas rubra.